The following is a 523-amino-acid chain: La-related protein 1C (523 aa).

A compositionally biased stretch (low complexity) spans 1 to 16 (MASATSNNPASSSMSP). Disordered stretches follow at residues 1–52 (MASA…VRGE) and 95–313 (AAGD…VRHP). A2 is modified (N-acetylalanine). The segment covering 22 to 31 (NHGSPTASVA) has biased composition (polar residues). Composition is skewed to low complexity over residues 32–44 (QSPRRPSRQVSSP) and 146–169 (SNKSSSDSLKSLGDVPSSSSASSS). The residue at position 33 (S33) is a Phosphoserine. Composition is skewed to polar residues over residues 206–270 (QRNG…NGNH) and 282–305 (HGNQNWTFQRSFNGREGNAQSQRG). An HTH La-type RNA-binding domain is found at 363–452 (HYQDPPLHMK…RDNWQNWVLR (90 aa)). The tract at residues 474 to 523 (GNLSVDQSSADPIGGSSSQLQPTEALSDDQQQSSSTAPVSNHNAPDGANR) is disordered. Residues 477–516 (SVDQSSADPIGGSSSQLQPTEALSDDQQQSSSTAPVSNHN) are compositionally biased toward polar residues.

The protein belongs to the LARP family. As to expression, age-dependent accumulation in rosette leaves.

Its subcellular location is the cytoplasm. Promotes leaf senescence mediated by abscisic acid (ABA), salicylic acid (SA) and jasmonic acid (MeJA), probably though the induction of expression of senescence-associated genes (SAGs) and defense-related genes. The protein is La-related protein 1C (LARP1C) of Arabidopsis thaliana (Mouse-ear cress).